We begin with the raw amino-acid sequence, 162 residues long: SsrA-binding protein (162 aa).

It belongs to the SmpB family.

It is found in the cytoplasm. Required for rescue of stalled ribosomes mediated by trans-translation. Binds to transfer-messenger RNA (tmRNA), required for stable association of tmRNA with ribosomes. tmRNA and SmpB together mimic tRNA shape, replacing the anticodon stem-loop with SmpB. tmRNA is encoded by the ssrA gene; the 2 termini fold to resemble tRNA(Ala) and it encodes a 'tag peptide', a short internal open reading frame. During trans-translation Ala-aminoacylated tmRNA acts like a tRNA, entering the A-site of stalled ribosomes, displacing the stalled mRNA. The ribosome then switches to translate the ORF on the tmRNA; the nascent peptide is terminated with the 'tag peptide' encoded by the tmRNA and targeted for degradation. The ribosome is freed to recommence translation, which seems to be the essential function of trans-translation. This chain is SsrA-binding protein, found in Colwellia psychrerythraea (strain 34H / ATCC BAA-681) (Vibrio psychroerythus).